Consider the following 299-residue polypeptide: Bifunctional protein FolD (299 aa).

NADP(+)-binding positions include 168–170 (GRS), serine 193, and isoleucine 234.

It belongs to the tetrahydrofolate dehydrogenase/cyclohydrolase family. As to quaternary structure, homodimer.

It carries out the reaction (6R)-5,10-methylene-5,6,7,8-tetrahydrofolate + NADP(+) = (6R)-5,10-methenyltetrahydrofolate + NADPH. It catalyses the reaction (6R)-5,10-methenyltetrahydrofolate + H2O = (6R)-10-formyltetrahydrofolate + H(+). It participates in one-carbon metabolism; tetrahydrofolate interconversion. Functionally, catalyzes the oxidation of 5,10-methylenetetrahydrofolate to 5,10-methenyltetrahydrofolate and then the hydrolysis of 5,10-methenyltetrahydrofolate to 10-formyltetrahydrofolate. This is Bifunctional protein FolD from Bartonella bacilliformis (strain ATCC 35685 / KC583 / Herrer 020/F12,63).